The sequence spans 433 residues: MKNKIKFANELLDFIYKSPTAFHAVDTIKKVLNKEGFSELKECEKWNIEKGKKYYMTKNDSAIVAFVVGNGEVHEDGFKIIGAHTDSPTFRIKPNPEMTSEQSYIKLNTEVYGGPILNTWIDRPLAVAGRVTLKGENILFPETKLVNINKPIMIIPNLAIHMNRNINQGIELNRQVDTLPILGLINDKFEKNDYLLKAIAKELDVDYKEIIDFDLFLYEYEKGSIIGIENEFVSSGRLDDLEAVHAALEGLTQSNVSKATNVLVCFDNEEVGSSTKQGADSNMLANVLERIVISLNGDREDFFRALSKSFIISSDSAHAVHPNKGEKCDPTNRPKLNKGPAIKIAASQSYTSDSNSSSVFKALCSKADVPVQEFVNRSDERGGSTIGPISSTHLNIRSVDIGTPLLAMHSIRELCGVDDHYYGMKVFKEFYNL.

Histidine 84, histidine 161, and histidine 409 together coordinate Zn(2+).

This sequence belongs to the peptidase M18 family. It depends on Zn(2+) as a cofactor.

The polypeptide is Probable M18 family aminopeptidase 2 (Clostridium novyi (strain NT)).